A 153-amino-acid polypeptide reads, in one-letter code: Cytochrome c oxidase subunit 5A, mitochondrial (153 aa).

Residues methionine 1–phenylalanine 20 constitute a mitochondrion transit peptide. At alanine 21 to asparagine 88 the chain is on the mitochondrial matrix side. The helical transmembrane segment at lysine 89–alanine 111 threads the bilayer. Residues valine 112 to lysine 153 lie on the Mitochondrial intermembrane side of the membrane.

This sequence belongs to the cytochrome c oxidase IV family. In terms of assembly, component of the cytochrome c oxidase (complex IV, CIV), a multisubunit enzyme composed of 12 subunits. The complex is composed of a catalytic core of 3 subunits COX1, COX2 and COX3, encoded in the mitochondrial DNA, and 9 supernumerary subunits COX4, COX5A (or COX5B), COX6, COX7, COX8, COX9, COX12, COX13 and COX26, which are encoded in the nuclear genome. COX5A is the predominant subunit V during aerobic/normoxic growth, it gets replaced by COX5B under anaerobic/hypoxic conditions. The complex exists as a monomer or a dimer and forms supercomplexes (SCs) in the inner mitochondrial membrane with a dimer of ubiquinol-cytochrome c oxidoreductase (cytochrome b-c1 complex, complex III, CIII), resulting in 2 different assemblies (supercomplexes III(2)IV and III(2)IV(2)). COX5A interacts with COR1, CYT1 and QCR6 at the CIII-CIV interface.

It localises to the mitochondrion inner membrane. It participates in energy metabolism; oxidative phosphorylation. In terms of biological role, component of the cytochrome c oxidase, the last enzyme in the mitochondrial electron transport chain which drives oxidative phosphorylation. The respiratory chain contains 3 multisubunit complexes succinate dehydrogenase (complex II, CII), ubiquinol-cytochrome c oxidoreductase (cytochrome b-c1 complex, complex III, CIII) and cytochrome c oxidase (complex IV, CIV), that cooperate to transfer electrons derived from NADH and succinate to molecular oxygen, creating an electrochemical gradient over the inner membrane that drives transmembrane transport and the ATP synthase. Cytochrome c oxidase is the component of the respiratory chain that catalyzes the reduction of oxygen to water. Electrons originating from reduced cytochrome c in the intermembrane space (IMS) are transferred via the dinuclear copper A center (CU(A)) of COX2 and heme A of COX1 to the active site in COX1, a binuclear center (BNC) formed by heme A3 and copper B (CU(B)). The BNC reduces molecular oxygen to 2 water molecules using 4 electrons from cytochrome c in the IMS and 4 protons from the mitochondrial matrix. The protein is Cytochrome c oxidase subunit 5A, mitochondrial (COX5A) of Saccharomyces cerevisiae (strain ATCC 204508 / S288c) (Baker's yeast).